Reading from the N-terminus, the 200-residue chain is Charged multivesicular body protein 6 (200 aa).

The N-myristoyl glycine moiety is linked to residue Gly2. Residues 10–145 adopt a coiled-coil conformation; sequence QSRVTEQDRA…YQRQIDELLA (136 aa). Ser119 bears the Phosphoserine mark. Phosphothreonine is present on Thr130. The Type-2 MIT-interacting motif signature appears at 168–179; it reads MELPEVPSEPLP. The interval 168–200 is disordered; sequence MELPEVPSEPLPDRNPEAPAKARSRQAELVAAS.

It belongs to the SNF7 family. Probable core component of the endosomal sorting required for transport complex III (ESCRT-III). ESCRT-III components are thought to multimerize to form a flat lattice on the perimeter membrane of the endosome. Several assembly forms of ESCRT-III may exist that interact and act sequentially. Interacts with VPS4A; the interaction is direct. Interacts with VPS4B; the interaction is direct. Interacts with CHMP4A, CHMP4B and CHMP4C. Interacts with SNF8, VPS25 and VPS36. Post-translationally, ISGylated in a CHMP5-dependent manner. Isgylation weakens its interaction with VPS4A.

It is found in the endomembrane system. Its subcellular location is the endosome membrane. The protein resides in the late endosome membrane. The protein localises to the membrane. Probable core component of the endosomal sorting required for transport complex III (ESCRT-III) which is involved in multivesicular bodies (MVBs) formation and sorting of endosomal cargo proteins into MVBs. MVBs contain intraluminal vesicles (ILVs) that are generated by invagination and scission from the limiting membrane of the endosome and mostly are delivered to lysosomes enabling degradation of membrane proteins, such as stimulated growth factor receptors, lysosomal enzymes and lipids. The MVB pathway appears to require the sequential function of ESCRT-O, -I,-II and -III complexes. ESCRT-III proteins mostly dissociate from the invaginating membrane before the ILV is released. The ESCRT machinery also functions in topologically equivalent membrane fission events, such as the terminal stages of cytokinesis. ESCRT-III proteins are believed to mediate the necessary vesicle extrusion and/or membrane fission activities, possibly in conjunction with the AAA ATPase VPS4. In the ESCRT-III complex, it probably serves as an acceptor for the ESCRT-II complex on endosomal membranes. In Mus musculus (Mouse), this protein is Charged multivesicular body protein 6 (Chmp6).